A 366-amino-acid chain; its full sequence is Apolipoprotein A-V (366 aa).

The signal sequence occupies residues Met1–Ala23. Coiled-coil stretches lie at residues Ala54–Asp157 and Thr236–Ala262. The residue at position 55 (Thr55) is a Phosphothreonine; by FAM20C. Ser59 carries the phosphoserine modification.

It belongs to the apolipoprotein A1/A4/E family. Interacts with GPIHBP1. Interacts with SORL1; this interaction leads to APOA5 internalization and sorting either to lysosomes and degradation, or to the trans-Golgi network. In terms of processing, phosphorylated by FAM20C in the extracellular medium. As to expression, liver and plasma.

Its subcellular location is the secreted. The protein localises to the early endosome. It localises to the late endosome. The protein resides in the golgi apparatus. It is found in the trans-Golgi network. Functionally, minor apolipoprotein mainly associated with HDL and to a lesser extent with VLDL. May also be associated with chylomicrons. Important determinant of plasma triglyceride (TG) levels by both being a potent stimulator of apo-CII lipoprotein lipase (LPL) TG hydrolysis and an inhibitor of the hepatic VLDL-TG production rate (without affecting the VLDL-apoB production rate). Activates poorly lecithin:cholesterol acyltransferase (LCAT) and does not enhance efflux of cholesterol from macrophages. Binds heparin. In Homo sapiens (Human), this protein is Apolipoprotein A-V (APOA5).